The primary structure comprises 199 residues: Recombination protein RecR (199 aa).

The segment at cysteine 58–cysteine 73 adopts a C4-type zinc-finger fold. One can recognise a Toprim domain in the interval serine 81 to proline 176.

This sequence belongs to the RecR family.

Its function is as follows. May play a role in DNA repair. It seems to be involved in an RecBC-independent recombinational process of DNA repair. It may act with RecF and RecO. This chain is Recombination protein RecR, found in Desulforapulum autotrophicum (strain ATCC 43914 / DSM 3382 / VKM B-1955 / HRM2) (Desulfobacterium autotrophicum).